The following is a 556-amino-acid chain: Potassium-transporting ATPase potassium-binding subunit (556 aa).

The next 10 helical transmembrane spans lie at 6 to 26 (AGLI…VPLG), 65 to 85 (GVLA…LVQG), 133 to 153 (GLAV…VALV), 176 to 196 (LRIL…GGAI), 249 to 269 (PTAW…FSLP), 283 to 303 (YAIA…MLWF), 378 to 398 (GLYG…LMVG), 419 to 439 (YFLV…ALPG), 483 to 503 (ALGL…LALA), and 526 to 546 (FVGM…LPML).

The protein belongs to the KdpA family. In terms of assembly, the system is composed of three essential subunits: KdpA, KdpB and KdpC.

It is found in the cell membrane. Part of the high-affinity ATP-driven potassium transport (or Kdp) system, which catalyzes the hydrolysis of ATP coupled with the electrogenic transport of potassium into the cytoplasm. This subunit binds the extracellular potassium ions and delivers the ions to the membrane domain of KdpB through an intramembrane tunnel. The chain is Potassium-transporting ATPase potassium-binding subunit from Mycolicibacterium paratuberculosis (strain ATCC BAA-968 / K-10) (Mycobacterium paratuberculosis).